A 183-amino-acid polypeptide reads, in one-letter code: Inner membrane-spanning protein YciB (183 aa).

5 helical membrane-spanning segments follow: residues 4 to 24, 50 to 70, 72 to 92, 119 to 139, and 149 to 169; these read FIEFIPLIVFFAVYKFYDIYM, MQLFTFLLVGFFGGLTVFFHD, TFIKWKVTVINVLFALGLLIS, VNLGWAGFFTVCGLLNLYVAF, and FKVFGLLGMTLVFTLLSGVYL.

It belongs to the YciB family.

Its subcellular location is the cell inner membrane. Its function is as follows. Plays a role in cell envelope biogenesis, maintenance of cell envelope integrity and membrane homeostasis. The protein is Inner membrane-spanning protein YciB of Aeromonas hydrophila subsp. hydrophila (strain ATCC 7966 / DSM 30187 / BCRC 13018 / CCUG 14551 / JCM 1027 / KCTC 2358 / NCIMB 9240 / NCTC 8049).